We begin with the raw amino-acid sequence, 106 residues long: Large ribosomal subunit protein eL42 (106 aa).

Residues C12, C17, C74, and C77 each contribute to the Zn(2+) site.

Belongs to the eukaryotic ribosomal protein eL42 family. Component of the large ribosomal subunit. Mature ribosomes consist of a small (40S) and a large (60S) subunit. The 40S subunit contains about 32 different proteins and 1 molecule of RNA (18S). The 60S subunit contains 45 different proteins and 3 molecules of RNA (25S, 5.8S and 5S). Zn(2+) serves as cofactor.

The protein localises to the cytoplasm. Component of the ribosome, a large ribonucleoprotein complex responsible for the synthesis of proteins in the cell. The small ribosomal subunit (SSU) binds messenger RNAs (mRNAs) and translates the encoded message by selecting cognate aminoacyl-transfer RNA (tRNA) molecules. The large subunit (LSU) contains the ribosomal catalytic site termed the peptidyl transferase center (PTC), which catalyzes the formation of peptide bonds, thereby polymerizing the amino acids delivered by tRNAs into a polypeptide chain. The nascent polypeptides leave the ribosome through a tunnel in the LSU and interact with protein factors that function in enzymatic processing, targeting, and the membrane insertion of nascent chains at the exit of the ribosomal tunnel. This Candida albicans (strain SC5314 / ATCC MYA-2876) (Yeast) protein is Large ribosomal subunit protein eL42 (RPL44).